Consider the following 742-residue polypeptide: Phosphoribosylformylglycinamidine synthase subunit PurL (742 aa).

The active site involves H54. ATP contacts are provided by Y57 and K96. Residue E98 participates in Mg(2+) binding. Substrate is bound by residues 99 to 102 (SHNH) and R121. Catalysis depends on H100, which acts as the Proton acceptor. D122 provides a ligand contact to Mg(2+). Q245 contacts substrate. Mg(2+) is bound at residue D273. 317–319 (ESQ) lines the substrate pocket. ATP is bound by residues D500 and G537. N538 is a binding site for Mg(2+). S540 is a binding site for substrate.

The protein belongs to the FGAMS family. Monomer. Part of the FGAM synthase complex composed of 1 PurL, 1 PurQ and 2 PurS subunits.

The protein localises to the cytoplasm. The enzyme catalyses N(2)-formyl-N(1)-(5-phospho-beta-D-ribosyl)glycinamide + L-glutamine + ATP + H2O = 2-formamido-N(1)-(5-O-phospho-beta-D-ribosyl)acetamidine + L-glutamate + ADP + phosphate + H(+). The protein operates within purine metabolism; IMP biosynthesis via de novo pathway; 5-amino-1-(5-phospho-D-ribosyl)imidazole from N(2)-formyl-N(1)-(5-phospho-D-ribosyl)glycinamide: step 1/2. Its function is as follows. Part of the phosphoribosylformylglycinamidine synthase complex involved in the purines biosynthetic pathway. Catalyzes the ATP-dependent conversion of formylglycinamide ribonucleotide (FGAR) and glutamine to yield formylglycinamidine ribonucleotide (FGAM) and glutamate. The FGAM synthase complex is composed of three subunits. PurQ produces an ammonia molecule by converting glutamine to glutamate. PurL transfers the ammonia molecule to FGAR to form FGAM in an ATP-dependent manner. PurS interacts with PurQ and PurL and is thought to assist in the transfer of the ammonia molecule from PurQ to PurL. The chain is Phosphoribosylformylglycinamidine synthase subunit PurL from Bacillus velezensis (strain DSM 23117 / BGSC 10A6 / LMG 26770 / FZB42) (Bacillus amyloliquefaciens subsp. plantarum).